Here is a 183-residue protein sequence, read N- to C-terminus: MAKVRLTTEEIMKIGFFEKIANVPILDCVLNDERVAFIVKEGDVGAAIGKGGENVKTAEEKFGKKVDIIEYSDDWRKFIRNIFAPIQLDDVWVKRVGKDVVAFIKINPKVRRAVFGEKGKNLERALKILKRHTKITKIKVIVENQKFKRKRAKRPVVKDQQQEQTETKQETDVQQDVKETVKE.

The region spanning 32–98 (DERVAFIVKE…DDVWVKRVGK (67 aa)) is the KH domain. A disordered region spans residues 149 to 183 (RKRAKRPVVKDQQQEQTETKQETDVQQDVKETVKE). Basic and acidic residues predominate over residues 156–183 (VVKDQQQEQTETKQETDVQQDVKETVKE).

Belongs to the NusA family.

The protein resides in the cytoplasm. Participates in transcription termination. This Methanocaldococcus jannaschii (strain ATCC 43067 / DSM 2661 / JAL-1 / JCM 10045 / NBRC 100440) (Methanococcus jannaschii) protein is Probable transcription termination protein NusA.